The primary structure comprises 181 residues: GATA zinc finger domain-containing protein 22 (181 aa).

A GATA-type zinc finger spans residues 118–145 (CQICLTNNTPYWRWSVIENNKIRVCNRC).

This Dictyostelium discoideum (Social amoeba) protein is GATA zinc finger domain-containing protein 22 (gtaV).